We begin with the raw amino-acid sequence, 1001 residues long: UPF0182 protein Mjls_1469 (1001 aa).

Helical transmembrane passes span 16–36 (VLIG…RFID), 61–81 (VVVF…GLAL), 112–132 (LFGF…AQSY), 174–194 (FVAT…FGGI), 209–229 (IQLV…YWLD), 258–278 (KLIL…AIVL), and 286–306 (IGVV…PLVV). Low complexity predominate over residues 900 to 929 (ATGPAPANLPDGQPAAQPPNGQQPAAQTPG). Residues 900–977 (ATGPAPANLP…MSGLQDAQRS (78 aa)) are disordered.

It belongs to the UPF0182 family.

The protein localises to the cell membrane. This chain is UPF0182 protein Mjls_1469, found in Mycobacterium sp. (strain JLS).